A 226-amino-acid chain; its full sequence is E3 ubiquitin-protein ligase RNF186 (226 aa).

The RING-type zinc-finger motif lies at 39 to 85 (CLVCREPYNCARSPKLLSCQHTFCAVCLKLLLYVQEDTWSIPCPLCR). 2 consecutive transmembrane segments (helical) span residues 157-177 (HLLL…PGVI) and 179-199 (WVLA…CCHP).

As to quaternary structure, interacts with BNIP1. Post-translationally, polyubiquitinated. 'Lys-29'-linked autoubiquitination leads to proteasomal degradation.

It localises to the endoplasmic reticulum membrane. It catalyses the reaction S-ubiquitinyl-[E2 ubiquitin-conjugating enzyme]-L-cysteine + [acceptor protein]-L-lysine = [E2 ubiquitin-conjugating enzyme]-L-cysteine + N(6)-ubiquitinyl-[acceptor protein]-L-lysine.. It functions in the pathway protein modification; protein ubiquitination. In terms of biological role, E3 ubiquitin protein ligase that is part of an apoptotic signaling pathway activated by endoplasmic reticulum stress. Stimulates the expression of proteins specific of the unfolded protein response (UPR), ubiquitinates BNIP1 and regulates its localization to the mitochondrion and induces calcium release from the endoplasmic reticulum that ultimately leads to cell apoptosis. Plays a role in the maintenance of intestinal homeostasis and clearance of enteric pathogens. Upon NOD2 stimulation, ubiquitinates the ER stress sensor activating transcription factor 6/ATF6 and promotes the unfolded protein response UPR. Participates in basal level of autophagy maintenance by regulating the ubiquitination of EPHB2. Upon stimulation by ligand EFNB1, ubiquitinates EPHB2 and further recruits MAP1LC3B for autophagy induction. Controls nutrient sensing by ubiquitinating Sestrin-2/SESN2, which is an intracellular sensor of cytosolic leucine and inhibitor of mTORC1 activity. This is E3 ubiquitin-protein ligase RNF186 from Mus musculus (Mouse).